The chain runs to 283 residues: Urease accessory protein UreD (283 aa).

It belongs to the UreD family. As to quaternary structure, ureD, UreF and UreG form a complex that acts as a GTP-hydrolysis-dependent molecular chaperone, activating the urease apoprotein by helping to assemble the nickel containing metallocenter of UreC. The UreE protein probably delivers the nickel.

It localises to the cytoplasm. In terms of biological role, required for maturation of urease via the functional incorporation of the urease nickel metallocenter. In Rhodopseudomonas palustris (strain BisB5), this protein is Urease accessory protein UreD.